Reading from the N-terminus, the 429-residue chain is UPF0761 membrane protein ABO_1543 (429 aa).

6 helical membrane passes run 45 to 65 (LFAI…VPAL), 102 to 122 (LTVL…STVE), 141 to 161 (LLMY…GLAI), 184 to 204 (WLAV…YTVV), 216 to 236 (LGAA…TFFI), and 256 to 278 (LLWI…ALVV).

The protein belongs to the UPF0761 family.

It localises to the cell inner membrane. The polypeptide is UPF0761 membrane protein ABO_1543 (Alcanivorax borkumensis (strain ATCC 700651 / DSM 11573 / NCIMB 13689 / SK2)).